The chain runs to 338 residues: Taste receptor type 2 member 39 (338 aa).

Topologically, residues 1-30 (MLGRCFPPNTKEKQQLRMIKLCDPAESELS) are extracellular. The chain crosses the membrane as a helical span at residues 31–51 (PFLITLTLAVLLAEYLTGIIA). The Cytoplasmic segment spans residues 52 to 74 (NGFITAIHAAECVQNKSVSTSGR). The chain crosses the membrane as a helical span at residues 75-95 (ILVFLSVSRIALQSLMMLEIT). Topologically, residues 96–116 (ISSTSLSFYSEDTVYYAFKIS) are extracellular. Residues 117-137 (FIFLNFCSLWFAAWLSFFYFV) form a helical membrane-spanning segment. The Cytoplasmic segment spans residues 138-156 (KIANFSYPLFLKLRWRISG). A helical transmembrane segment spans residues 157-177 (LIPWLLWLSVFISFSHSMFCI). Residues 178 to 205 (NICTGYCDNSFPIHSSNSTEKTYFSEIS) lie on the Extracellular side of the membrane. Residue Asn194 is glycosylated (N-linked (GlcNAc...) asparagine). The helical transmembrane segment at 206-226 (VVSLAFFFNLGIVIPLIMFIL) threads the bilayer. The Cytoplasmic segment spans residues 227–262 (AAILLILSLKRHTLYMXSNATGSKDPSMEAHIGAIK). A helical transmembrane segment spans residues 263–283 (ATSYFLILYIFNAVALFIYLS). The Extracellular segment spans residues 284–291 (NMFDINSL). A helical membrane pass occupies residues 292–312 (WNTLCQIIMAAYPASHSILLI). At 313-338 (KDNPGLRRAWKQLQHRLHLYPKEWTL) the chain is on the cytoplasmic side.

The protein belongs to the G-protein coupled receptor T2R family.

The protein resides in the membrane. Functionally, receptor that may play a role in the perception of bitterness and is gustducin-linked. May play a role in sensing the chemical composition of the gastrointestinal content. The activity of this receptor may stimulate alpha gustducin, mediate PLC-beta-2 activation and lead to the gating of TRPM5. The protein is Taste receptor type 2 member 39 (TAS2R39) of Papio hamadryas (Hamadryas baboon).